Here is a 227-residue protein sequence, read N- to C-terminus: Extracellular deoxyribonuclease (227 aa).

An N-terminal signal peptide occupies residues 1 to 20 (MFRPLLSFTLARLVSLPLHA).

This sequence belongs to the EndA/NucM nuclease family.

Its subcellular location is the secreted. This Aeromonas hydrophila protein is Extracellular deoxyribonuclease.